Consider the following 82-residue polypeptide: RNA-binding protein GK0100 (82 aa).

The protein belongs to the eukaryotic ribosomal protein eL8 family.

The chain is RNA-binding protein GK0100 from Geobacillus kaustophilus (strain HTA426).